Consider the following 85-residue polypeptide: U4-theraphotoxin-Hhn1c (85 aa).

Positions 1–22 (MKVTLIAIVTCAAVLVLHTTAA) are cleaved as a signal peptide. The propeptide occupies 23 to 48 (EELEAESQLMEVGMPDTELAAVDEER). 3 disulfide bridges follow: Cys-52-Cys-66, Cys-56-Cys-77, and Cys-71-Cys-82.

It belongs to the neurotoxin 12 (Hwtx-2) family. 02 (Hwtx-2) subfamily. In terms of tissue distribution, expressed by the venom gland.

Its subcellular location is the secreted. Its function is as follows. Postsynaptic neurotoxin. The chain is U4-theraphotoxin-Hhn1c from Cyriopagopus hainanus (Chinese bird spider).